The sequence spans 356 residues: 3-dehydroquinate synthase (356 aa).

NAD(+) contacts are provided by residues 69 to 74 (DGEQYK), 103 to 107 (GVVGD), 127 to 128 (TT), Lys-140, and Lys-149. Zn(2+) contacts are provided by Glu-182, His-245, and His-262.

Belongs to the sugar phosphate cyclases superfamily. Dehydroquinate synthase family. The cofactor is Co(2+). Zn(2+) is required as a cofactor. Requires NAD(+) as cofactor.

The protein resides in the cytoplasm. The enzyme catalyses 7-phospho-2-dehydro-3-deoxy-D-arabino-heptonate = 3-dehydroquinate + phosphate. It participates in metabolic intermediate biosynthesis; chorismate biosynthesis; chorismate from D-erythrose 4-phosphate and phosphoenolpyruvate: step 2/7. Its function is as follows. Catalyzes the conversion of 3-deoxy-D-arabino-heptulosonate 7-phosphate (DAHP) to dehydroquinate (DHQ). The protein is 3-dehydroquinate synthase of Pseudoalteromonas translucida (strain TAC 125).